We begin with the raw amino-acid sequence, 879 residues long: MEKLGLNQIREMYLSFFEKKAHLRLPSFSLVPQNDKSLLLINAGMTPLKPYFTGLKVPPSKRVATCQKCIRTGDIENVGKTSRHGTFFEMLGNFSFGDYFKKEAIPWAWEFITEVLKLPKDRLYVTIYLDDDEAYDIWVKSTDVDPSKIFRLGKEDNFWEHGVGPCGPCSEIYYDRAQEKINSVEEFVEAADNDKIVEFWNLVFTQFDKDENGNYNRLSNPNIDTGMGLERMATIMQGENSIFEVDTINAILKEVCNISGTKYNEHKNNDISIRIITDHIRSITFMISDGILPSNEGRGYVLRRLLRRAAKHGKSLGIDDRFLYKLSNVVIDNSCESYPKLKDRKEYIKKVIRLEEERFDETIDSGMKILNEFIEELENSNSLLLEGEKAFKLYDTYGFPIELTEEILQEKNMGVDLEGFNKKMQNQKEMARSARTETNYMGAEDTVLNKIPLYIDTVFEGYNSLESTSKVKLMIKEGEFVSLLSQGEKGVILVANTPFYAEMGGQVGDKGIIYNENFEGKIIDCKNNVAGKILHFVEVISGSVSLEDTVLLKVDKNRRDDIRRNHTSTHLLGEALRRVLGEHVHQSGSYVDEHRLRFDFNHFESLNDKQLREVEELVNENIRKAKTVNTNLMSLEEAKKSGAVAIFDSKYSDEVRVVSIGDFSRELCGGTHVGNSGEIGLFKIVSEAGIAAGIRRIEAVTGREAVEYLYSKSDMLKEIANKFKCSEKEIVHKLDLQFNELRELRKELEEFKIKLAGSAEESILNGVKIVKGINLFTGILKDVDGNALRELADKIRSKSQNAVVLLGSNAEGKVNLVAMATKDAVEKGVHCGKIIKEVAAVAGGGGGGRPDMAQAGGKFPDKLEEAIGKCSAIMEKIVK.

His-566, His-570, Cys-668, and His-672 together coordinate Zn(2+).

It belongs to the class-II aminoacyl-tRNA synthetase family. It depends on Zn(2+) as a cofactor.

It is found in the cytoplasm. The catalysed reaction is tRNA(Ala) + L-alanine + ATP = L-alanyl-tRNA(Ala) + AMP + diphosphate. Catalyzes the attachment of alanine to tRNA(Ala) in a two-step reaction: alanine is first activated by ATP to form Ala-AMP and then transferred to the acceptor end of tRNA(Ala). Also edits incorrectly charged Ser-tRNA(Ala) and Gly-tRNA(Ala) via its editing domain. This is Alanine--tRNA ligase from Clostridium kluyveri (strain ATCC 8527 / DSM 555 / NBRC 12016 / NCIMB 10680 / K1).